The primary structure comprises 268 residues: AB hydrolase superfamily protein YisY (268 aa).

Residues 23-254 (PIIFLHGWPL…NSGHGAFYEE (232 aa)) enclose the AB hydrolase-1 domain. Catalysis depends on residues S96, D220, and H248.

Belongs to the AB hydrolase superfamily.

The polypeptide is AB hydrolase superfamily protein YisY (yisY) (Bacillus subtilis (strain 168)).